Consider the following 113-residue polypeptide: Large ribosomal subunit protein bL17 (113 aa).

This sequence belongs to the bacterial ribosomal protein bL17 family. As to quaternary structure, part of the 50S ribosomal subunit. Contacts protein L32.

The polypeptide is Large ribosomal subunit protein bL17 (Symbiobacterium thermophilum (strain DSM 24528 / JCM 14929 / IAM 14863 / T)).